We begin with the raw amino-acid sequence, 143 residues long: Ribosome-binding factor A (143 aa).

Residues 123 to 143 (DNSLQENYKDSDKETKVEKLR) form a disordered region.

This sequence belongs to the RbfA family. Monomer. Binds 30S ribosomal subunits, but not 50S ribosomal subunits or 70S ribosomes.

Its subcellular location is the cytoplasm. Its function is as follows. One of several proteins that assist in the late maturation steps of the functional core of the 30S ribosomal subunit. Associates with free 30S ribosomal subunits (but not with 30S subunits that are part of 70S ribosomes or polysomes). Required for efficient processing of 16S rRNA. May interact with the 5'-terminal helix region of 16S rRNA. The sequence is that of Ribosome-binding factor A from Francisella philomiragia subsp. philomiragia (strain ATCC 25017 / CCUG 19701 / FSC 153 / O#319-036).